Consider the following 210-residue polypeptide: ATP-dependent Clp protease proteolytic subunit (210 aa).

The Nucleophile role is filled by S106. The active site involves H131.

Belongs to the peptidase S14 family. Fourteen ClpP subunits assemble into 2 heptameric rings which stack back to back to give a disk-like structure with a central cavity, resembling the structure of eukaryotic proteasomes.

The protein localises to the cytoplasm. It carries out the reaction Hydrolysis of proteins to small peptides in the presence of ATP and magnesium. alpha-casein is the usual test substrate. In the absence of ATP, only oligopeptides shorter than five residues are hydrolyzed (such as succinyl-Leu-Tyr-|-NHMec, and Leu-Tyr-Leu-|-Tyr-Trp, in which cleavage of the -Tyr-|-Leu- and -Tyr-|-Trp bonds also occurs).. Functionally, cleaves peptides in various proteins in a process that requires ATP hydrolysis. Has a chymotrypsin-like activity. Plays a major role in the degradation of misfolded proteins. The chain is ATP-dependent Clp protease proteolytic subunit from Afipia carboxidovorans (strain ATCC 49405 / DSM 1227 / KCTC 32145 / OM5) (Oligotropha carboxidovorans).